Reading from the N-terminus, the 37-residue chain is Cytochrome b6-f complex subunit 5 (37 aa).

Residues 5–25 (LLSGIVLGLIPITLFGLLVAA) traverse the membrane as a helical segment.

Belongs to the PetG family. As to quaternary structure, the 4 large subunits of the cytochrome b6-f complex are cytochrome b6, subunit IV (17 kDa polypeptide, PetD), cytochrome f and the Rieske protein, while the 4 small subunits are PetG, PetL, PetM and PetN. The complex functions as a dimer.

It is found in the plastid. The protein localises to the chloroplast thylakoid membrane. Its function is as follows. Component of the cytochrome b6-f complex, which mediates electron transfer between photosystem II (PSII) and photosystem I (PSI), cyclic electron flow around PSI, and state transitions. PetG is required for either the stability or assembly of the cytochrome b6-f complex. This chain is Cytochrome b6-f complex subunit 5, found in Pyropia yezoensis (Susabi-nori).